A 330-amino-acid chain; its full sequence is Glycerol-3-phosphate dehydrogenase [NAD(P)+] (330 aa).

4 residues coordinate NADPH: serine 10, tryptophan 11, arginine 31, and lysine 105. The sn-glycerol 3-phosphate site is built by lysine 105, glycine 135, and serine 137. Alanine 139 contacts NADPH. The sn-glycerol 3-phosphate site is built by lysine 190, aspartate 243, serine 253, arginine 254, and asparagine 255. Lysine 190 functions as the Proton acceptor in the catalytic mechanism. NADPH is bound at residue arginine 254. Residues valine 278 and glutamate 280 each contribute to the NADPH site.

Belongs to the NAD-dependent glycerol-3-phosphate dehydrogenase family.

The protein resides in the cytoplasm. The enzyme catalyses sn-glycerol 3-phosphate + NAD(+) = dihydroxyacetone phosphate + NADH + H(+). It catalyses the reaction sn-glycerol 3-phosphate + NADP(+) = dihydroxyacetone phosphate + NADPH + H(+). Its pathway is membrane lipid metabolism; glycerophospholipid metabolism. In terms of biological role, catalyzes the reduction of the glycolytic intermediate dihydroxyacetone phosphate (DHAP) to sn-glycerol 3-phosphate (G3P), the key precursor for phospholipid synthesis. This is Glycerol-3-phosphate dehydrogenase [NAD(P)+] from Nitratidesulfovibrio vulgaris (strain ATCC 29579 / DSM 644 / CCUG 34227 / NCIMB 8303 / VKM B-1760 / Hildenborough) (Desulfovibrio vulgaris).